The primary structure comprises 398 residues: uncharacterized protein (398 aa).

This sequence belongs to the class-V pyridoxal-phosphate-dependent aminotransferase family. As to quaternary structure, homodimer.

Its function is as follows. Is essential for optimal growth. This is an uncharacterized protein from Mycobacterium tuberculosis (strain CDC 1551 / Oshkosh).